Consider the following 388-residue polypeptide: Glucose-6-phosphate/phosphate translocator 1, chloroplastic (388 aa).

The N-terminal 65 residues, 1–65, are a transit peptide targeting the chloroplast; sequence MVLSVKQTLS…LRAKSPVVRC (65 aa). Transmembrane regions (helical) follow at residues 95–115, 129–149, 158–178, 211–231, 233–253, 273–293, 305–325, and 363–383; these read LKIGIYFATWWALNVVFNIYN, STLSLAAGSLMMLISWAVGIV, FWKTLFPVAVAHTIGHVAATV, FPTSVYLSLIPIIGGCALSAL, ELNFNMIGFMGAMISNLAFVF, YACLSMLSLLILTPFAIAVEG, LATVGPQFVWWVVAQSVFYHL, and TPVQPVNALGAAIAILGTFLY. Positions 112-229 constitute an EamA domain; the sequence is NIYNKKVLNA…IPIIGGCALS (118 aa).

The protein belongs to the TPT transporter family. GPT (TC 2.A.7.9) subfamily. Expressed in seeds, flowers, rosette leaves, and roots, with highest levels found in stamens. Found in the root cap, in guard cells and in mesophyll cells.

Its subcellular location is the plastid. It is found in the chloroplast membrane. It localises to the endoplasmic reticulum membrane. The protein resides in the peroxisome membrane. Its function is as follows. Glucose 6-phosphate (Glc6P) transporter. Also transports inorganic phosphate, 3-phosphoglycerate, triose phosphates and, to a leser extent, phosphoenolpyruvate. Responsible for the transport of Glc6P into plastids of heterotrophic tissues where it can be used as a carbon source for starch biosynthesis, as substrate for fatty acid biosynthesis or as substrate for NADPH generation via the oxidative pentose phosphate pathway (OPPP). Required for pollen maturation and embryo sac development. Preferentially exchanges Glc6P for ribulose-5-phosphate (Ru5P) in reconstituted yeast proteoliposomes. May supply the substrate (Glc6P) for OPPP reactions inside peroxisomes and exchange it with the product Ru5P which leaves the organelle. This is Glucose-6-phosphate/phosphate translocator 1, chloroplastic from Arabidopsis thaliana (Mouse-ear cress).